The following is a 31-amino-acid chain: Cytochrome b6-f complex subunit 8 (31 aa).

Residues 5–25 (IVSLAWAALMVVFTFSLSLVV) traverse the membrane as a helical segment.

Belongs to the PetN family. In terms of assembly, the 4 large subunits of the cytochrome b6-f complex are cytochrome b6, subunit IV (17 kDa polypeptide, PetD), cytochrome f and the Rieske protein, while the 4 small subunits are PetG, PetL, PetM and PetN. The complex functions as a dimer.

It localises to the plastid. The protein localises to the chloroplast thylakoid membrane. Component of the cytochrome b6-f complex, which mediates electron transfer between photosystem II (PSII) and photosystem I (PSI), cyclic electron flow around PSI, and state transitions. The polypeptide is Cytochrome b6-f complex subunit 8 (Acorus calamus (Sweet flag)).